Here is a 228-residue protein sequence, read N- to C-terminus: MPTIMSAVVLLSGGLDSATVLRMAHATGQRIHALSFRYGQRHTMELEMARKQALSLPGVAHRIMDLQLSLFGGSALTADIPVPKGGVDENTIPVTYVPARNMVFLSLALAWAESLGAQHLYIGVNAVDYSGYPDCRPEFIQSFQQTANLATKAGVEGHPFTVHTPLINLTKAQIIQQGLALGVDYGLTRSCYDPDAQGAGCGLCDACRLRLQGFAEAGVPDPAPYQGP.

11-21 serves as a coordination point for ATP; the sequence is LSGGLDSATVL. The Zn(2+) site is built by C191, C201, C204, and C207.

It belongs to the QueC family. Zn(2+) is required as a cofactor.

It carries out the reaction 7-carboxy-7-deazaguanine + NH4(+) + ATP = 7-cyano-7-deazaguanine + ADP + phosphate + H2O + H(+). The protein operates within purine metabolism; 7-cyano-7-deazaguanine biosynthesis. In terms of biological role, catalyzes the ATP-dependent conversion of 7-carboxy-7-deazaguanine (CDG) to 7-cyano-7-deazaguanine (preQ(0)). This is 7-cyano-7-deazaguanine synthase from Magnetococcus marinus (strain ATCC BAA-1437 / JCM 17883 / MC-1).